The following is a 557-amino-acid chain: Formate--tetrahydrofolate ligase (557 aa).

67 to 74 (TPAGEGKS) contacts ATP.

The protein belongs to the formate--tetrahydrofolate ligase family.

The enzyme catalyses (6S)-5,6,7,8-tetrahydrofolate + formate + ATP = (6R)-10-formyltetrahydrofolate + ADP + phosphate. It participates in one-carbon metabolism; tetrahydrofolate interconversion. This Latilactobacillus sakei subsp. sakei (strain 23K) (Lactobacillus sakei subsp. sakei) protein is Formate--tetrahydrofolate ligase.